Here is a 549-residue protein sequence, read N- to C-terminus: Glucose-6-phosphate isomerase (549 aa).

The active-site Proton donor is E355. Active-site residues include H386 and K514.

The protein belongs to the GPI family.

Its subcellular location is the cytoplasm. It carries out the reaction alpha-D-glucose 6-phosphate = beta-D-fructose 6-phosphate. The protein operates within carbohydrate biosynthesis; gluconeogenesis. It participates in carbohydrate degradation; glycolysis; D-glyceraldehyde 3-phosphate and glycerone phosphate from D-glucose: step 2/4. Catalyzes the reversible isomerization of glucose-6-phosphate to fructose-6-phosphate. The protein is Glucose-6-phosphate isomerase of Desulfatibacillum aliphaticivorans.